A 379-amino-acid chain; its full sequence is Thiosulfate/3-mercaptopyruvate sulfurtransferase 1, mitochondrial (379 aa).

Residues 1-56 (MASTLFSRTFLAASHRLITPSLPQKIFNPATFLSRSLHSQLGSASTAYKSTTWARR) constitute a mitochondrion transit peptide. Alanine 57 is subject to N-acetylalanine. 2 Rhodanese domains span residues 91–208 (REPD…DVES) and 259–373 (EDPT…LPIE). Cysteine 333 acts as the Cysteine persulfide intermediate in catalysis.

As to expression, expressed in roots, rosette and cauline leaves, stems, flowers and siliques.

The protein localises to the mitochondrion. The catalysed reaction is thiosulfate + hydrogen cyanide = thiocyanate + sulfite + 2 H(+). It carries out the reaction 2-oxo-3-sulfanylpropanoate + [thioredoxin]-dithiol = [thioredoxin]-disulfide + hydrogen sulfide + pyruvate + H(+). Functionally, catalyzes the transfer of a sulfur ion from a donor to cyanide or to other thiol compounds. Substrate preference is 3-mercaptopyruvate &gt; thiosulfate. Involved in embryo and seed development. The chain is Thiosulfate/3-mercaptopyruvate sulfurtransferase 1, mitochondrial (STR1) from Arabidopsis thaliana (Mouse-ear cress).